The following is a 437-amino-acid chain: (S)-6-hydroxynicotine oxidase (437 aa).

FAD is bound by residues S16, 35-37 (EAR), R43, 57-60 (GGAG), V231, S405, and 413-415 (EYI).

Belongs to the flavin monoamine oxidase family. In terms of assembly, homodimer. The cofactor is FAD.

It catalyses the reaction (S)-6-hydroxynicotine + O2 + H2O = 6-hydroxypseudooxynicotine + H2O2. The catalysed reaction is (S)-6-hydroxynicotine + O2 = 6-hydroxy-N-methylmyosmine + H2O2. It participates in alkaloid degradation; nicotine degradation; 6-hydroxypseudooxynicotine from nicotine (S-isomer route): step 2/2. With respect to regulation, partially inhibited by Co(2+) or Zn(2+) and significantly inhibited by Ag(+), Cu(2+) and Hg(2+). Its function is as follows. Involved in the degradation of L-nicotine. Catalyzes the oxidation of (S)-6-hydroxynicotine (6-hydroxy-L-nicotine) to 6-hydroxypseudooxynicotine. Oxidation of the pyrrolidine ring of (S)-6-hydroxynicotine leads to the formation of the optically inactive 6-hydroxy-N-methylmyosmine, which hydrolyzes spontaneously to 6-hydroxypseudooxynicotine. Acts with absolute stereospecificity on the L-form of 6-hydroxynicotine. Also involved in the degradation of nornicotine, and catalyzes the oxidation of 6-hydroxynornicotine to 6-hydroxymyosmine, which hydrolyzes to 6-hydroxypseudooxynornicotine. In vitro, converts (S)-nicotine into N-methylmyosmine, which spontaneously hydrolyzes spontaneously into pseudooxynicotine, but catalytic efficiency is about 1900-fold higher with (S)-6-hydroxynicotine. This chain is (S)-6-hydroxynicotine oxidase, found in Shinella sp. (strain HZN7).